Consider the following 422-residue polypeptide: Zinc finger protein Gfi-1 (422 aa).

The interval 1 to 20 (MPRSFLVKSKKAHSYHQPRS) is SNAG domain. Positions 1–109 (MPRSFLVKSK…ASEKSMCPSL (109 aa)) are disordered. A phosphoserine mark is found at Ser-20 and Ser-56. Residues 140-257 (RPCGALERGA…LLLGGGSYKC (118 aa)) are required for interaction with RELA. 6 consecutive C2H2-type zinc fingers follow at residues 255-278 (YKCI…RRSH), 284-306 (FACE…KAVH), 312-334 (FDCK…LLIH), 340-362 (YPCQ…TFIH), 368-390 (HKCQ…SRKH), and 396-419 (FGCD…ETQH).

Interacts with U2AF1L4. Component of RCOR-GFI-KDM1A-HDAC complexes. Interacts directly with RCOR1, KDM1A and HDAC2. Also interacts with HDAC1. Interacts (via the zinc-finger domain) with ARIH2; the interaction prevents GFI1 ubiquitination and proteasomal degradation. Interacts with PIAS3; the interaction relieves the inhibitory effect of PIAS3 on STAT3-mediated transcriptional activity. Forms a complex with EHMT2 and HDAC1 to promote 'Lys-9' dimethylation of H3 (H3K9Me2) and repress expression of target genes. Interacts directly with EHMT2. Component of the GFI1-AJUBA-HDAC1 repressor complex. Interacts directly with AJUBA (via ITS LIM domains); the interaction results in the HDAC-dependent corepression of a subset of GFI1 target genes and, occurs independently of the SNAG domain. Interacts with SPI1; the interaction inhibits SPI1 transcriptional activity targeted at macrophage-specific genes, repressing macrophage differentiation of myeloid progenitor cells and promoting granulocyte commitment. Interacts with RUNX1T1; the interaction represses HDAC-mediated transcriptional activity. Interacts with RELA; the interaction occurs on liposaccharide (LPS) stimulation and controls RELA DNA binding activity and regulates endotoxin-mediated TOLL-like receptor inflammatory response. Interacts (via the C-terminal zinc fingers) with ZBTB17; the interaction results in the recruitment of GFI1 to the CDKN1A/p21 and CDKN1B promoters and repression of transcription. Post-translationally, ubiquitinated. Ubiquitination and degradation by the proteasome is inhibited by the ubiquitin ligase, ARIH2.

The protein resides in the nucleus. In terms of biological role, transcription repressor essential for hematopoiesis. Functions in a cell-context and development-specific manner. Binds to 5'-TAAATCAC[AT]GCA-3' in the promoter region of a large number of genes. Component of several complexes, including the EHMT2-GFI1-HDAC1, AJUBA-GFI1-HDAC1 and RCOR-GFI-KDM1A-HDAC complexes, that suppress, via histone deacetylase (HDAC) recruitment, a number of genes implicated in multilineage blood cell development. Regulates neutrophil differentiation, promotes proliferation of lymphoid cells, and is required for granulocyte development. Inhibits SPI1 transcriptional activity at macrophage-specific genes, repressing macrophage differentiation of myeloid progenitor cells and promoting granulocyte commitment. Mediates, together with U2AF1L4, the alternative splicing of CD45 and controls T-cell receptor signaling. Regulates the endotoxin-mediated Toll-like receptor (TLR) inflammatory response by antagonizing RELA. Cooperates with CBFA2T2 to regulate ITGB1-dependent neurite growth. Controls cell-cycle progression by repressing CDKNIA/p21 transcription in response to TGFB1 via recruitment of GFI1 by ZBTB17 to the CDKNIA/p21 and CDKNIB promoters. Required for the maintenance of inner ear hair cells. In addition to its role in transcription, acts as a substrate adapter for PRMT1 in the DNA damage response: facilitates the recognition of TP53BP1 and MRE11 substrates by PRMT1, promoting their methylation and the DNA damage response. This chain is Zinc finger protein Gfi-1 (GFI1), found in Homo sapiens (Human).